The primary structure comprises 305 residues: Methionyl-tRNA formyltransferase (305 aa).

108–111 (SLLP) is a (6S)-5,6,7,8-tetrahydrofolate binding site.

Belongs to the Fmt family.

The enzyme catalyses L-methionyl-tRNA(fMet) + (6R)-10-formyltetrahydrofolate = N-formyl-L-methionyl-tRNA(fMet) + (6S)-5,6,7,8-tetrahydrofolate + H(+). Its function is as follows. Attaches a formyl group to the free amino group of methionyl-tRNA(fMet). The formyl group appears to play a dual role in the initiator identity of N-formylmethionyl-tRNA by promoting its recognition by IF2 and preventing the misappropriation of this tRNA by the elongation apparatus. The polypeptide is Methionyl-tRNA formyltransferase (Thermus thermophilus (strain ATCC BAA-163 / DSM 7039 / HB27)).